Reading from the N-terminus, the 240-residue chain is Ribonuclease T2 (240 aa).

The first 19 residues, 1 to 19, serve as a signal peptide directing secretion; it reads MRFIAFAVIFSAVYLCSSA. An intrachain disulfide couples cysteine 41 to cysteine 46. Histidine 56 is an active-site residue. Disulfide bonds link cysteine 66-cysteine 110, cysteine 173-cysteine 227, and cysteine 191-cysteine 201. N-linked (GlcNAc...) asparagine glycosylation is found at asparagine 67 and asparagine 73. Catalysis depends on residues glutamate 103 and histidine 107.

It belongs to the RNase T2 family. Ubiquitous.

The protein resides in the lysosome lumen. Its subcellular location is the endoplasmic reticulum lumen. The protein localises to the secreted. It carries out the reaction a ribonucleotidyl-ribonucleotide-RNA + H2O = a 3'-end 3'-phospho-ribonucleotide-RNA + a 5'-end dephospho-ribonucleoside-RNA + H(+). In terms of biological role, has ribonuclease activity, with higher activity at acidic pH. Probably is involved in lysosomal degradation of ribosomal RNA. The chain is Ribonuclease T2 (rnaset2) from Danio rerio (Zebrafish).